The primary structure comprises 415 residues: MKGSYKSRWVIVIVVVIAAIAAFWFWQGRNDSQSAAPGATKQAQQSPAGGRRGMRSGPLAPVQAATAVEQAVPRYLTGLGTITAANTVTVRSRVDGQLMALHFQEGQQVKAGDLLAEIDPSQFKVALAQAQGQLAKDKATLANARRDLARYQQLAKTNLVSRQELDAQQALVSETEGTIKADEASVASAQLQLDWSRITAPVDGRVGLKQVDVGNQISSGDTTGIVVITQTHPIDLVFTLPESDIATVVQAQKAGKPLVVEAWDRTNSKKLSEGTLLSLDNQIDATTGTIKVKARFNNQDDALFPNQFVNARMLVDTEQNAVVIPTAALQMGNEGHFVWVLNSENKVSKHLVTPGIQDSQKVVIRAGISAGDRVVTDGIDRLTEGAKVEVVEAQSTTTSEEKATSREYAKKGARS.

The first 21 residues, 1–21 (MKGSYKSRWVIVIVVVIAAIA), serve as a signal peptide directing secretion. Residues 31–47 (DSQSAAPGATKQAQQSP) are compositionally biased toward polar residues. Disordered stretches follow at residues 31 to 60 (DSQSAAPGATKQAQQSPAGGRRGMRSGPLA) and 392 to 415 (EAQSTTTSEEKATSREYAKKGARS). The segment covering 399-415 (SEEKATSREYAKKGARS) has biased composition (basic and acidic residues).

Belongs to the membrane fusion protein (MFP) (TC 8.A.1) family. As to quaternary structure, part of a tripartite efflux system composed of MdtA, MdtB and MdtC.

The protein resides in the cell inner membrane. In terms of biological role, the MdtABC tripartite complex confers resistance against novobiocin and deoxycholate. The polypeptide is Multidrug resistance protein MdtA (Escherichia coli O139:H28 (strain E24377A / ETEC)).